A 531-amino-acid chain; its full sequence is GTPase Obg (531 aa).

The Obg domain maps to 2-159 (ASFVDRVIVH…QEVELELKSI (158 aa)). The 182-residue stretch at 160–341 (ADIALVGFPS…LSFAMAALVS (182 aa)) folds into the OBG-type G domain. GTP contacts are provided by residues 166–173 (GFPSAGKS), 191–195 (FTTLV), 212–215 (DVPG), 293–296 (NKVD), and 322–324 (STA). 2 residues coordinate Mg(2+): Ser-173 and Thr-193. A disordered region spans residues 346–365 (QEEQREQQRQTVPVLQPEPV). Residues 368–453 (RRGRDRREFV…ENGVVFDWEP (86 aa)) form the OCT domain. Positions 459 to 531 (AELLGGPRGS…TSETKETNEK (73 aa)) are disordered. Composition is skewed to basic and acidic residues over residues 468–507 (SDLR…ERRA) and 514–531 (VDAR…TNEK).

This sequence belongs to the TRAFAC class OBG-HflX-like GTPase superfamily. OBG GTPase family. As to quaternary structure, monomer. The cofactor is Mg(2+).

The protein localises to the cytoplasm. An essential GTPase which binds GTP, GDP and possibly (p)ppGpp with moderate affinity, with high nucleotide exchange rates and a fairly low GTP hydrolysis rate. Plays a role in control of the cell cycle, stress response, ribosome biogenesis and in those bacteria that undergo differentiation, in morphogenesis control. The polypeptide is GTPase Obg (Kocuria rhizophila (strain ATCC 9341 / DSM 348 / NBRC 103217 / DC2201)).